The primary structure comprises 222 residues: Probable transaldolase (222 aa).

K83 functions as the Schiff-base intermediate with substrate in the catalytic mechanism.

It belongs to the transaldolase family. Type 3B subfamily.

The protein localises to the cytoplasm. It carries out the reaction D-sedoheptulose 7-phosphate + D-glyceraldehyde 3-phosphate = D-erythrose 4-phosphate + beta-D-fructose 6-phosphate. It functions in the pathway carbohydrate degradation; pentose phosphate pathway; D-glyceraldehyde 3-phosphate and beta-D-fructose 6-phosphate from D-ribose 5-phosphate and D-xylulose 5-phosphate (non-oxidative stage): step 2/3. Transaldolase is important for the balance of metabolites in the pentose-phosphate pathway. This Nitrosopumilus maritimus (strain SCM1) protein is Probable transaldolase.